Here is a 272-residue protein sequence, read N- to C-terminus: uncharacterized protein (272 aa).

The region spanning 1–27 is the HTH merR-type domain; that stretch reads MDTLAFINRALVEEGYSLKDIKLVLIT.

This is an uncharacterized protein from Aquifex aeolicus (strain VF5).